We begin with the raw amino-acid sequence, 191 residues long: MKKQLLSALIGASLLAPMAASAADYVIDREGAHASITFKVSHLGYSYVVGRFNDFSGDFSYDAAKPTAAKVNVKVNTLSVDSNHAERDKHIRSADFLNTSKFAQATFTSTTVEDKGNGDLVINGNLTLNGVTKPLAINAHAVGEGQDPWGGYRAGFTGTTTFAMKDFGIKMDLGPASSHVELDLVVEGVRK.

The N-terminal stretch at Met1–Ala22 is a signal peptide.

Belongs to the UPF0312 family. Type 1 subfamily.

Its subcellular location is the periplasm. This Shewanella baltica (strain OS155 / ATCC BAA-1091) protein is UPF0312 protein Sbal_3041.